The sequence spans 274 residues: Formamidopyrimidine-DNA glycosylase (274 aa).

The active-site Schiff-base intermediate with DNA is proline 2. Glutamate 3 acts as the Proton donor in catalysis. Catalysis depends on lysine 58, which acts as the Proton donor; for beta-elimination activity. Histidine 91 and arginine 110 together coordinate DNA. An FPG-type zinc finger spans residues 238–272 (QVYDKTGQECVRCGTIIEKIQLGGRGTHFCPNCQR). The active-site Proton donor; for delta-elimination activity is arginine 262.

The protein belongs to the FPG family. As to quaternary structure, monomer. Requires Zn(2+) as cofactor.

The enzyme catalyses Hydrolysis of DNA containing ring-opened 7-methylguanine residues, releasing 2,6-diamino-4-hydroxy-5-(N-methyl)formamidopyrimidine.. The catalysed reaction is 2'-deoxyribonucleotide-(2'-deoxyribose 5'-phosphate)-2'-deoxyribonucleotide-DNA = a 3'-end 2'-deoxyribonucleotide-(2,3-dehydro-2,3-deoxyribose 5'-phosphate)-DNA + a 5'-end 5'-phospho-2'-deoxyribonucleoside-DNA + H(+). Its function is as follows. Involved in base excision repair of DNA damaged by oxidation or by mutagenic agents. Acts as a DNA glycosylase that recognizes and removes damaged bases. Has a preference for oxidized purines, such as 7,8-dihydro-8-oxoguanine (8-oxoG). Has AP (apurinic/apyrimidinic) lyase activity and introduces nicks in the DNA strand. Cleaves the DNA backbone by beta-delta elimination to generate a single-strand break at the site of the removed base with both 3'- and 5'-phosphates. The chain is Formamidopyrimidine-DNA glycosylase from Streptococcus pneumoniae (strain ATCC BAA-255 / R6).